A 560-amino-acid polypeptide reads, in one-letter code: Chaperonin GroEL 2 (560 aa).

Residues 29–32 (TIGP), 86–90 (DGTTT), glycine 413, and aspartate 492 contribute to the ATP site. Positions 520 to 542 (DKPEPPSAPGAEGGDPMGGMGGM) are disordered. Gly residues predominate over residues 530 to 542 (AEGGDPMGGMGGM).

The protein belongs to the chaperonin (HSP60) family. As to quaternary structure, forms a cylinder of 14 subunits composed of two heptameric rings stacked back-to-back. Interacts with the co-chaperonin GroES.

The protein localises to the cytoplasm. The catalysed reaction is ATP + H2O + a folded polypeptide = ADP + phosphate + an unfolded polypeptide.. Functionally, together with its co-chaperonin GroES, plays an essential role in assisting protein folding. The GroEL-GroES system forms a nano-cage that allows encapsulation of the non-native substrate proteins and provides a physical environment optimized to promote and accelerate protein folding. The protein is Chaperonin GroEL 2 of Prochlorococcus marinus (strain NATL2A).